The chain runs to 154 residues: Interleukin-2 (154 aa).

An N-terminal signal peptide occupies residues methionine 1–glycine 20. O-linked (GalNAc...) threonine glycosylation is present at threonine 23. Cysteine 78 and cysteine 126 are disulfide-bonded.

Belongs to the IL-2 family.

The protein localises to the secreted. Cytokine produced by activated CD4-positive helper T-cells and to a lesser extend activated CD8-positive T-cells and natural killer (NK) cells that plays pivotal roles in the immune response and tolerance. Binds to a receptor complex composed of either the high-affinity trimeric IL-2R (IL2RA/CD25, IL2RB/CD122 and IL2RG/CD132) or the low-affinity dimeric IL-2R (IL2RB and IL2RG). Interaction with the receptor leads to oligomerization and conformation changes in the IL-2R subunits resulting in downstream signaling starting with phosphorylation of JAK1 and JAK3. In turn, JAK1 and JAK3 phosphorylate the receptor to form a docking site leading to the phosphorylation of several substrates including STAT5. This process leads to activation of several pathways including STAT, phosphoinositide-3-kinase/PI3K and mitogen-activated protein kinase/MAPK pathways. Functions as a T-cell growth factor and can increase NK-cell cytolytic activity as well. Promotes strong proliferation of activated B-cells and subsequently immunoglobulin production. Plays a pivotal role in regulating the adaptive immune system by controlling the survival and proliferation of regulatory T-cells, which are required for the maintenance of immune tolerance. Moreover, participates in the differentiation and homeostasis of effector T-cell subsets, including Th1, Th2, Th17 as well as memory CD8-positive T-cells. In Delphinapterus leucas (Beluga whale), this protein is Interleukin-2 (IL2).